The following is a 166-amino-acid chain: uncharacterized protein (166 aa).

The region spanning 2–82 (DNWVCYLIMS…KRLSKKRNIQ (81 aa)) is the GIY-YIG domain. The disordered stretch occupies residues 23–43 (NNRQRRLNDHNNLNPSRKGAK).

This is an uncharacterized protein from Acanthamoeba polyphaga mimivirus (APMV).